A 188-amino-acid chain; its full sequence is uncharacterized protein (188 aa).

This is an uncharacterized protein from Saccharomyces cerevisiae (strain ATCC 204508 / S288c) (Baker's yeast).